A 164-amino-acid chain; its full sequence is Transcription elongation factor GreA (164 aa).

Residues 50-76 (YHAAREEQGQQEARIRQLQDLLSNAKV) are a coiled coil.

The protein belongs to the GreA/GreB family.

Functionally, necessary for efficient RNA polymerase transcription elongation past template-encoded arresting sites. The arresting sites in DNA have the property of trapping a certain fraction of elongating RNA polymerases that pass through, resulting in locked ternary complexes. Cleavage of the nascent transcript by cleavage factors such as GreA or GreB allows the resumption of elongation from the new 3'terminus. GreA releases sequences of 2 to 3 nucleotides. The sequence is that of Transcription elongation factor GreA from Mycobacterium bovis (strain ATCC BAA-935 / AF2122/97).